A 304-amino-acid chain; its full sequence is Dihydroorotate dehydrogenase B (NAD(+)), catalytic subunit (304 aa).

Residues serine 21 and 45–46 (KA) each bind FMN. Substrate-binding positions include lysine 45 and 69–73 (NAIGL). FMN-binding residues include asparagine 99 and asparagine 127. Position 127 (asparagine 127) interacts with substrate. Cysteine 130 (nucleophile) is an active-site residue. Residues lysine 165 and isoleucine 191 each coordinate FMN. 192-193 (NT) provides a ligand contact to substrate. FMN contacts are provided by residues glycine 217, 243 to 244 (GG), and 265 to 266 (GT).

It belongs to the dihydroorotate dehydrogenase family. Type 1 subfamily. In terms of assembly, heterotetramer of 2 PyrK and 2 PyrD type B subunits. FMN serves as cofactor.

It localises to the cytoplasm. It catalyses the reaction (S)-dihydroorotate + NAD(+) = orotate + NADH + H(+). Its pathway is pyrimidine metabolism; UMP biosynthesis via de novo pathway; orotate from (S)-dihydroorotate (NAD(+) route): step 1/1. Functionally, catalyzes the conversion of dihydroorotate to orotate with NAD(+) as electron acceptor. This Shouchella clausii (strain KSM-K16) (Alkalihalobacillus clausii) protein is Dihydroorotate dehydrogenase B (NAD(+)), catalytic subunit (pyrD).